The sequence spans 372 residues: Alanine dehydrogenase 1 (372 aa).

The active site involves His94. Residue 170–200 participates in NAD(+) binding; that stretch reads TYVIFGGGVAATNAANVALGLNAKVIIIELN.

Belongs to the AlaDH/PNT family.

The catalysed reaction is L-alanine + NAD(+) + H2O = pyruvate + NH4(+) + NADH + H(+). The protein operates within amino-acid degradation; L-alanine degradation via dehydrogenase pathway; NH(3) and pyruvate from L-alanine: step 1/1. In terms of biological role, may play a role in cell wall synthesis as L-alanine is an important constituent of the peptidoglycan layer. The sequence is that of Alanine dehydrogenase 1 (ald1) from Staphylococcus aureus (strain USA300).